A 166-amino-acid chain; its full sequence is Small ribosomal subunit protein uS5 (166 aa).

The S5 DRBM domain occupies 11–74 (LDDNVVAINR…EAAKKNLITV (64 aa)).

The protein belongs to the universal ribosomal protein uS5 family. As to quaternary structure, part of the 30S ribosomal subunit. Contacts proteins S4 and S8.

In terms of biological role, with S4 and S12 plays an important role in translational accuracy. Functionally, located at the back of the 30S subunit body where it stabilizes the conformation of the head with respect to the body. The sequence is that of Small ribosomal subunit protein uS5 from Lactiplantibacillus plantarum (strain ATCC BAA-793 / NCIMB 8826 / WCFS1) (Lactobacillus plantarum).